The following is a 313-amino-acid chain: Methionyl-tRNA formyltransferase (313 aa).

113–116 is a binding site for (6S)-5,6,7,8-tetrahydrofolate; it reads SLLP.

It belongs to the Fmt family.

It carries out the reaction L-methionyl-tRNA(fMet) + (6R)-10-formyltetrahydrofolate = N-formyl-L-methionyl-tRNA(fMet) + (6S)-5,6,7,8-tetrahydrofolate + H(+). Functionally, attaches a formyl group to the free amino group of methionyl-tRNA(fMet). The formyl group appears to play a dual role in the initiator identity of N-formylmethionyl-tRNA by promoting its recognition by IF2 and preventing the misappropriation of this tRNA by the elongation apparatus. The sequence is that of Methionyl-tRNA formyltransferase from Francisella tularensis subsp. holarctica (strain FTNF002-00 / FTA).